We begin with the raw amino-acid sequence, 480 residues long: Aspartyl/glutamyl-tRNA(Asn/Gln) amidotransferase subunit B (480 aa).

This sequence belongs to the GatB/GatE family. GatB subfamily. As to quaternary structure, heterotrimer of A, B and C subunits.

It carries out the reaction L-glutamyl-tRNA(Gln) + L-glutamine + ATP + H2O = L-glutaminyl-tRNA(Gln) + L-glutamate + ADP + phosphate + H(+). It catalyses the reaction L-aspartyl-tRNA(Asn) + L-glutamine + ATP + H2O = L-asparaginyl-tRNA(Asn) + L-glutamate + ADP + phosphate + 2 H(+). In terms of biological role, allows the formation of correctly charged Asn-tRNA(Asn) or Gln-tRNA(Gln) through the transamidation of misacylated Asp-tRNA(Asn) or Glu-tRNA(Gln) in organisms which lack either or both of asparaginyl-tRNA or glutaminyl-tRNA synthetases. The reaction takes place in the presence of glutamine and ATP through an activated phospho-Asp-tRNA(Asn) or phospho-Glu-tRNA(Gln). The chain is Aspartyl/glutamyl-tRNA(Asn/Gln) amidotransferase subunit B from Streptococcus pneumoniae (strain CGSP14).